Consider the following 243-residue polypeptide: Venom nerve growth factor (243 aa).

An N-terminal signal peptide occupies residues 1-18 (MSMLCYTLIIVFLIGIWA). A propeptide spanning residues 19 to 125 (APKSEDNVPL…TLNRNIRAKR (107 aa)) is cleaved from the precursor. Positions 47-66 (GLKTSRNTDQRHPAPKKAED) are enriched in basic and acidic residues. The disordered stretch occupies residues 47–69 (GLKTSRNTDQRHPAPKKAEDQEL). 3 disulfides stabilise this stretch: cysteine 139–cysteine 204, cysteine 182–cysteine 232, and cysteine 192–cysteine 234. A glycan (N-linked (GlcNAc...) asparagine) is linked at asparagine 148.

It belongs to the NGF-beta family. As to quaternary structure, homodimer; non-covalently linked. As to expression, expressed by the venom gland.

Its subcellular location is the secreted. In terms of biological role, nerve growth factor is important for the development and maintenance of the sympathetic and sensory nervous systems. It stimulates division and differentiation of sympathetic and embryonic sensory neurons as well as basal forebrain cholinergic neurons in the brain. Its relevance in the snake venom is not clear. However, it has been shown to inhibit metalloproteinase-dependent proteolysis of platelet glycoprotein Ib alpha, suggesting a metalloproteinase inhibition to prevent metalloprotease autodigestion and/or protection against prey proteases. Binds a lipid between the two protein chains in the homodimer. The lipid-bound form promotes histamine relase from mouse mast cells, contrary to the lipid-free form. This Oxyuranus scutellatus scutellatus (Australian taipan) protein is Venom nerve growth factor.